We begin with the raw amino-acid sequence, 1068 residues long: Leucine zipper protein 1 (1068 aa).

Ala2 bears the N-acetylalanine mark. A coiled-coil region spans residues 11–354; the sequence is ASNRHLRFKL…KLQVRKQKEL (344 aa). Disordered regions lie at residues 251-292, 375-402, and 432-558; these read LSSK…VKDL, TKLKGHGSEASVSKHTSRELSPQHKRER, and AAKA…QAVE. A compositionally biased stretch (basic and acidic residues) spans 254-292; sequence KESKRKGSLDYLKQVENETRDKSENEKNRNQEDNKVKDL. A phosphoserine mark is found at Ser256, Ser261, Ser395, Ser513, Ser571, Ser575, Ser612, and Ser660. Polar residues predominate over residues 510–519; it reads RTFSDSTHVS. The disordered stretch occupies residues 677–700; that stretch reads TTITPEPEPKPQPNSREKVKSRGG. Thr680 carries the post-translational modification Phosphothreonine. Residues Ser691 and Ser746 each carry the phosphoserine modification. Residues 782-829 are disordered; sequence QKSTSKSVTSKVTSSITIYPSDSSGPRAVPSEAPRERHTSTSNIQVGP. A compositionally biased stretch (low complexity) spans 785 to 796; it reads TSKSVTSKVTSS. A required for interaction with FLNA region spans residues 834-884; that stretch reads AISNHVSSPLELSIHKHDITLQLTEAERVGDGSPKNRAEMVVSRSSILIKP. Phosphoserine is present on Ser906. Positions 924-945 are disordered; sequence RDLKCSEDPPTGIGRNMEATNA. Thr952 is modified (phosphothreonine). Disordered regions lie at residues 959–995 and 1033–1068; these read QPRSQPSEQGARRVGNSGDAPELSPRRTQSSLTASEV and NPLEHSELPGKQGLPEPEPVWTEERLHPAKPYAEED. The segment covering 984–994 has biased composition (polar residues); the sequence is RRTQSSLTASE. Phosphoserine is present on Ser988.

Component of the CERF-1 ISWI chromatin remodeling complex (also called the CECR2-containing remodeling factor (CERF) complex) at least composed of CECR2 and SMARCA1. Component of the CERF-5 ISWI chromatin remodeling complex at least composed of CECR2 and SMARCA5/SNF2H. LUZP1 is detected as part of the CERF-1 and CERF-5 complexes in embryonic stem (ES) cells where it is involved in complex stabilization but is not detected in the complexes in the testis. Interacts (via C-terminus) with LIMA1/EPLIN; both proteins restrict ciliation and may work together to regulate this process. Interacts with myosin light chain MYL9; the interaction results in inhibition of phosphorylation of MYL9 by DAPK3. Interacts with DAPK3; the interaction is likely to occur throughout the cell cycle and reduces the LUZP1-mediated suppression of MYL9 phosphorylation. Interacts with the chromosomal passenger complex (CPC); CPC kinase activity is required for localization of LUZP1 to the centromere. In terms of tissue distribution, predominantly expressed in the brain (at protein level).

The protein localises to the cytoplasm. It localises to the cytoskeleton. The protein resides in the microtubule organizing center. It is found in the centrosome. Its subcellular location is the cilium basal body. The protein localises to the midbody. It localises to the chromosome. The protein resides in the centromere. It is found in the spindle. Its subcellular location is the stress fiber. The protein localises to the nucleus. It localises to the cell projection. The protein resides in the dendrite. It is found in the perikaryon. Its subcellular location is the cell junction. The protein localises to the tight junction. F-actin cross-linking protein. Stabilizes actin and acts as a negative regulator of primary cilium formation. Positively regulates the phosphorylation of both myosin II and protein phosphatase 1 regulatory subunit PPP1R12A/MYPT1 and promotes the assembly of myosin II stacks within actin stress fibers. Inhibits the phosphorylation of myosin light chain MYL9 by DAPK3 and suppresses the constriction velocity of the contractile ring during cytokinesis. Binds to microtubules and promotes epithelial cell apical constriction by up-regulating levels of diphosphorylated myosin light chain (MLC) through microtubule-dependent inhibition of MLC dephosphorylation by myosin phosphatase. Involved in regulation of cell migration, nuclear size and centriole number, probably through regulation of the actin cytoskeleton. Component of the CERF-1 and CERF-5 chromatin remodeling complexes in embryonic stem cells where it acts to stabilize the complexes. Plays a role in embryonic brain and cardiovascular development. This chain is Leucine zipper protein 1 (Luzp1), found in Mus musculus (Mouse).